The following is a 206-amino-acid chain: Guanylate kinase (206 aa).

Positions 6–184 constitute a Guanylate kinase-like domain; sequence GILFILSGPS…AVDKVKTIIK (179 aa). Residue 13–20 coordinates ATP; the sequence is GPSGVGKG.

It belongs to the guanylate kinase family.

The protein resides in the cytoplasm. It carries out the reaction GMP + ATP = GDP + ADP. Essential for recycling GMP and indirectly, cGMP. The sequence is that of Guanylate kinase from Oceanobacillus iheyensis (strain DSM 14371 / CIP 107618 / JCM 11309 / KCTC 3954 / HTE831).